A 270-amino-acid chain; its full sequence is uncharacterized protein (270 aa).

A signal peptide spans 1–22 (MEYIKKIALYMSVLLLIIFIGG). Cysteine 23 carries N-palmitoyl cysteine lipidation. A lipid anchor (S-diacylglycerol cysteine) is attached at cysteine 23.

The protein belongs to the staphylococcal tandem lipoprotein family.

It localises to the cell membrane. This is an uncharacterized protein from Staphylococcus aureus (strain NCTC 8325 / PS 47).